Here is an 890-residue protein sequence, read N- to C-terminus: Alanine--tRNA ligase (890 aa).

Zn(2+) is bound by residues His-565, His-569, Cys-677, and His-681.

The protein belongs to the class-II aminoacyl-tRNA synthetase family. Requires Zn(2+) as cofactor.

Its subcellular location is the cytoplasm. It catalyses the reaction tRNA(Ala) + L-alanine + ATP = L-alanyl-tRNA(Ala) + AMP + diphosphate. Its function is as follows. Catalyzes the attachment of alanine to tRNA(Ala) in a two-step reaction: alanine is first activated by ATP to form Ala-AMP and then transferred to the acceptor end of tRNA(Ala). Also edits incorrectly charged Ser-tRNA(Ala) and Gly-tRNA(Ala) via its editing domain. In Zymomonas mobilis subsp. mobilis (strain ATCC 31821 / ZM4 / CP4), this protein is Alanine--tRNA ligase.